Consider the following 204-residue polypeptide: Imidazoleglycerol-phosphate dehydratase (204 aa).

The protein belongs to the imidazoleglycerol-phosphate dehydratase family.

It localises to the cytoplasm. It carries out the reaction D-erythro-1-(imidazol-4-yl)glycerol 3-phosphate = 3-(imidazol-4-yl)-2-oxopropyl phosphate + H2O. It participates in amino-acid biosynthesis; L-histidine biosynthesis; L-histidine from 5-phospho-alpha-D-ribose 1-diphosphate: step 6/9. The polypeptide is Imidazoleglycerol-phosphate dehydratase (Corynebacterium jeikeium (strain K411)).